A 238-amino-acid chain; its full sequence is tRNA (guanine-N(7)-)-methyltransferase (238 aa).

Positions 68, 93, 120, and 143 each coordinate S-adenosyl-L-methionine. Residue Asp143 is part of the active site. Substrate-binding positions include Lys147, Asp179, and 216–219 (TKFE).

This sequence belongs to the class I-like SAM-binding methyltransferase superfamily. TrmB family.

The catalysed reaction is guanosine(46) in tRNA + S-adenosyl-L-methionine = N(7)-methylguanosine(46) in tRNA + S-adenosyl-L-homocysteine. It participates in tRNA modification; N(7)-methylguanine-tRNA biosynthesis. In terms of biological role, catalyzes the formation of N(7)-methylguanine at position 46 (m7G46) in tRNA. This Aliivibrio fischeri (strain MJ11) (Vibrio fischeri) protein is tRNA (guanine-N(7)-)-methyltransferase.